The sequence spans 96 residues: Conantokin Rl-B (96 aa).

The N-terminal stretch at 1-21 is a signal peptide; that stretch reads MQLYTYLYLLVPLVTFHLILG. Positions 22 to 78 are excised as a propeptide; the sequence is TGTLDHGDALTERRSTDATALKPEPVLLQKSSARSTNDNGKDTQMKRILKKRGNKAR. The tract at residues 51 to 96 is disordered; the sequence is KSSARSTNDNGKDTQMKRILKKRGNKARGEEELAEKAPEFARELAN. Residues 77–96 are compositionally biased toward basic and acidic residues; that stretch reads ARGEEELAEKAPEFARELAN. Position 81 (E81) interacts with a divalent metal cation. Residues E81, E82, and E85 each carry the 4-carboxyglutamate modification. E85 is a binding site for a divalent metal cation. P88 is subject to 4-hydroxyproline. A divalent metal cation is bound by residues E89 and E93. 2 positions are modified to 4-carboxyglutamate: E89 and E93. Position 96 is an asparagine amide (N96).

It belongs to the conotoxin B superfamily. The cofactor is Ca(2+). Mg(2+) is required as a cofactor. Hydroxylation of Pro-88 is important for NR2B/GRIN2B NMDA receptor selectivity. Removal of hydroxylation does not change global NMDA receptor antagonism (tested on WT neurons), but it decreases the inhibitory potency on NR2B/GRIN2B NMDA receptors and increases the inhibitory potency on NR2A/GRIN2A NMDA receptors. Hydroxylation of Pro-88 locally disrupts a small region of the divalent cation-induced alpha-helix but does not destabilize the entire helix. As to expression, expressed by the venom duct.

It is found in the secreted. Conantokins inhibit N-methyl-D-aspartate (NMDA) receptors. This toxin has antagonist activity on the NR2B/GRIN2B subunit (IC(50)=0.1 uM). In vivo, when delivered into the brain, is active has anticonvulsant activity in the model of epilepsy in mice. The protein is Conantokin Rl-B of Conus rolani (Cone snail).